Reading from the N-terminus, the 140-residue chain is MAKKEIAKIKLQIQAGAANPSPPVGPALGQHGLNIMEFCKAFNARTQDQKGMVIPVVITAYADRSFTFITKTPPASVLLAKAAKVAKGSGEPNKTKVGSVTMEQVEEIAKLKMPDLSAKDLPGAVKTIAGTARSMGIDVK.

Belongs to the universal ribosomal protein uL11 family. As to quaternary structure, part of the ribosomal stalk of the 50S ribosomal subunit. Interacts with L10 and the large rRNA to form the base of the stalk. L10 forms an elongated spine to which L12 dimers bind in a sequential fashion forming a multimeric L10(L12)X complex. Post-translationally, one or more lysine residues are methylated.

Its function is as follows. Forms part of the ribosomal stalk which helps the ribosome interact with GTP-bound translation factors. The sequence is that of Large ribosomal subunit protein uL11 from Oleidesulfovibrio alaskensis (strain ATCC BAA-1058 / DSM 17464 / G20) (Desulfovibrio alaskensis).